Here is a 293-residue protein sequence, read N- to C-terminus: MFTGSYVALITPMYQSGEIDYPSLKKLVDFHIANGSHGLIAVGTTGESATLPFDEHIEVVKRMVEFADKKIPVIAGSGANSTAEAIFLSEQMAGTGIDGFLSVVPYYNKPQQKGMVAHFNAVADATDLPVLLYNVPGRTVADMLPDTVAELATHPKIVGLKDATGDIARLKQMQPLVDKDFVFLSGDDATGCEFLTAGGHGVISVTANVVPKQMSQMCEAALAGNYSKAKEIDQQIAELHSALFIEPNPVLPKWALYKMGLIQSAFLRLPLIESELDSQNHIEQVMRNSGVLS.

Pyruvate is bound at residue T45. Catalysis depends on Y133, which acts as the Proton donor/acceptor. The Schiff-base intermediate with substrate role is filled by K161. Pyruvate is bound at residue I203.

Belongs to the DapA family. As to quaternary structure, homotetramer; dimer of dimers.

Its subcellular location is the cytoplasm. It carries out the reaction L-aspartate 4-semialdehyde + pyruvate = (2S,4S)-4-hydroxy-2,3,4,5-tetrahydrodipicolinate + H2O + H(+). It participates in amino-acid biosynthesis; L-lysine biosynthesis via DAP pathway; (S)-tetrahydrodipicolinate from L-aspartate: step 3/4. Functionally, catalyzes the condensation of (S)-aspartate-beta-semialdehyde [(S)-ASA] and pyruvate to 4-hydroxy-tetrahydrodipicolinate (HTPA). This Pseudoalteromonas atlantica (strain T6c / ATCC BAA-1087) protein is 4-hydroxy-tetrahydrodipicolinate synthase.